A 323-amino-acid polypeptide reads, in one-letter code: D-specific alpha-keto acid dehydrogenase (323 aa).

Residues 157 to 158, 230 to 232, and Asp256 each bind NAD(+); these read HI and TGR. Arg232 is an active-site residue. The active site involves Glu261. The active-site Proton donor is the His293. NAD(+) is bound at residue 293 to 296; that stretch reads HTAY.

It belongs to the D-isomer specific 2-hydroxyacid dehydrogenase family.

In terms of biological role, required for high-level resistance to glycopeptides antibiotics. Catalyzes the reduction of 2-keto acids to 2-D-hydroxy acids that give rise to peptidoglycan precursors that terminate in the depsipeptide D-alanine-2-lactate rather than the dipeptide D-alanine-D-alanine thus preventing vancomycin binding. The protein is D-specific alpha-keto acid dehydrogenase (vanHB) of Enterococcus faecalis (strain ATCC 700802 / V583).